A 501-amino-acid polypeptide reads, in one-letter code: ATP synthase subunit alpha (501 aa).

169–176 lines the ATP pocket; it reads GDRQTGKT.

The protein belongs to the ATPase alpha/beta chains family. F-type ATPases have 2 components, CF(1) - the catalytic core - and CF(0) - the membrane proton channel. CF(1) has five subunits: alpha(3), beta(3), gamma(1), delta(1), epsilon(1). CF(0) has three main subunits: a(1), b(2) and c(9-12). The alpha and beta chains form an alternating ring which encloses part of the gamma chain. CF(1) is attached to CF(0) by a central stalk formed by the gamma and epsilon chains, while a peripheral stalk is formed by the delta and b chains.

It localises to the cell inner membrane. The catalysed reaction is ATP + H2O + 4 H(+)(in) = ADP + phosphate + 5 H(+)(out). Produces ATP from ADP in the presence of a proton gradient across the membrane. The alpha chain is a regulatory subunit. In Campylobacter jejuni subsp. jejuni serotype O:6 (strain 81116 / NCTC 11828), this protein is ATP synthase subunit alpha.